Reading from the N-terminus, the 321-residue chain is MLSVDYENFDLISYLYNLVRQIPDGMVSTYGDLAEALGDPVAARSVGFMLSINKEPDYIPCYKVVPHDGSVGNYTHPLGSAEKMRRLIRDGITITNGHISNFEKVRFREFKTDYPLRKLRELQFKIGRLYDDRNDYSLDTIAAFDVSYKETRGYASKVVYNKGKIGAYVYSSDSMFPYIPGYLAFKEFKFIRALYDNETMILIDGNGILHPRFAGLATHAGVSLKTASIGIAKHLINCTVKGSDLLISGVVAGKMIGHHTIVSPGNRINVEEAGRLIEQREGKEMRSLLRLAHNLTRLHIETNGNIARYDFSTRNTAIQSS.

The tract at residues 1 to 86 is probable methylated-DNA--protein-cysteine methyltransferase; the sequence is MLSVDYENFD…PLGSAEKMRR (86 aa). The active site involves cysteine 61. The endonuclease V stretch occupies residues 87-318; it reads LIRDGITITN…YDFSTRNTAI (232 aa). Mg(2+)-binding residues include aspartate 145 and aspartate 204.

In the N-terminal section; belongs to the MGMT family. It in the C-terminal section; belongs to the endonuclease V family. Mg(2+) serves as cofactor.

The protein localises to the cytoplasm. The enzyme catalyses Endonucleolytic cleavage at apurinic or apyrimidinic sites to products with a 5'-phosphate.. Its function is as follows. DNA repair enzyme involved in the repair of deaminated bases. Selectively cleaves double-stranded DNA at the second phosphodiester bond 3' to a deoxyinosine leaving behind the intact lesion on the nicked DNA. The protein is Bifunctional methyltransferase/endonuclease of Thermoplasma volcanium (strain ATCC 51530 / DSM 4299 / JCM 9571 / NBRC 15438 / GSS1).